Consider the following 263-residue polypeptide: Proteasome subunit alpha type-1 (263 aa).

The residue at position 1 (Met1) is an N-acetylmethionine. Ser110 carries the post-translational modification Phosphoserine; alternate. Ser110 is a glycosylation site (O-linked (GlcNAc) serine; alternate). Residue Lys115 forms a Glycyl lysine isopeptide (Lys-Gly) (interchain with G-Cter in ubiquitin) linkage. Ser177 carries the phosphoserine modification. Lys208 is covalently cross-linked (Glycyl lysine isopeptide (Lys-Gly) (interchain with G-Cter in ubiquitin)). The interval 232–263 (FLDGLEERPQRKAQPSQAAEEPAEKADEPMEH) is disordered. The segment covering 253 to 263 (PAEKADEPMEH) has biased composition (basic and acidic residues).

Belongs to the peptidase T1A family. In terms of assembly, the 26S proteasome consists of a 20S proteasome core and two 19S regulatory subunits. The 20S proteasome core is a barrel-shaped complex made of 28 subunits that are arranged in four stacked rings. The two outer rings are each formed by seven alpha subunits, and the two inner rings are formed by seven beta subunits. The proteolytic activity is exerted by three beta-subunits PSMB5, PSMB6 and PSMB7. Interacts with NOTCH3. Interacts with ZFAND1. In terms of processing, C-terminal extension is partially cleaved off by limited proteolysis leading to a conversion of the proteasome from its latent into its active form. As to expression, detected in liver (at protein level).

The protein resides in the cytoplasm. It localises to the nucleus. Functionally, component of the 20S core proteasome complex involved in the proteolytic degradation of most intracellular proteins. This complex plays numerous essential roles within the cell by associating with different regulatory particles. Associated with two 19S regulatory particles, forms the 26S proteasome and thus participates in the ATP-dependent degradation of ubiquitinated proteins. The 26S proteasome plays a key role in the maintenance of protein homeostasis by removing misfolded or damaged proteins that could impair cellular functions, and by removing proteins whose functions are no longer required. Associated with the PA200 or PA28, the 20S proteasome mediates ubiquitin-independent protein degradation. This type of proteolysis is required in several pathways including spermatogenesis (20S-PA200 complex) or generation of a subset of MHC class I-presented antigenic peptides (20S-PA28 complex). This Mus musculus (Mouse) protein is Proteasome subunit alpha type-1 (Psma1).